The primary structure comprises 434 residues: Enolase (434 aa).

Substrate contacts are provided by H158 and E167. The active-site Proton donor is the E210. D245, E294, and D319 together coordinate Mg(2+). Residues E294 and D319 each contribute to the substrate site. Residue K344 is the Proton acceptor of the active site. Substrate is bound by residues S371–S374 and K395.

The protein belongs to the enolase family. In terms of assembly, homodimer. The cofactor is Mg(2+).

The protein resides in the cytoplasm. It catalyses the reaction (2R)-2-phosphoglycerate = phosphoenolpyruvate + H2O. It functions in the pathway carbohydrate degradation; glycolysis; pyruvate from D-glyceraldehyde 3-phosphate: step 4/5. The polypeptide is Enolase (Doryteuthis pealeii (Longfin inshore squid)).